An 836-amino-acid chain; its full sequence is Sucrose synthase 5 (836 aa).

A GT-B glycosyltransferase region spans residues 270–748 (RIFNVVIFSV…GLQRINECYT (479 aa)). Residues 805–836 (PPPLPPKPLVKPSASKGSKRTQPRLSFRLFGA) form a disordered region.

It belongs to the glycosyltransferase 1 family. Plant sucrose synthase subfamily. Detected in the whole plant but more precisely confined to the vasculature in cotyledons, leaves, petals, anthers and roots. Also detected in developing siliques, young immature rosette and cauline leaves.

Its subcellular location is the secreted. It localises to the cell wall. It carries out the reaction an NDP-alpha-D-glucose + D-fructose = a ribonucleoside 5'-diphosphate + sucrose + H(+). In terms of biological role, sucrose-cleaving enzyme that provides UDP-glucose and fructose for various metabolic pathways. Functions in callose synthesis at the site of phloem sieve elements. This Arabidopsis thaliana (Mouse-ear cress) protein is Sucrose synthase 5 (SUS5).